The sequence spans 471 residues: Glutamate--tRNA ligase (471 aa).

The short motif at 9–19 is the 'HIGH' region element; sequence PSPTGYLHVGG. Zn(2+) contacts are provided by Cys98, Cys100, Cys125, and Asp127. Positions 237–241 match the 'KMSKS' region motif; sequence KLSKR. Lys240 contacts ATP.

Belongs to the class-I aminoacyl-tRNA synthetase family. Glutamate--tRNA ligase type 1 subfamily. As to quaternary structure, monomer. Requires Zn(2+) as cofactor.

It is found in the cytoplasm. The enzyme catalyses tRNA(Glu) + L-glutamate + ATP = L-glutamyl-tRNA(Glu) + AMP + diphosphate. Catalyzes the attachment of glutamate to tRNA(Glu) in a two-step reaction: glutamate is first activated by ATP to form Glu-AMP and then transferred to the acceptor end of tRNA(Glu). The protein is Glutamate--tRNA ligase of Yersinia pseudotuberculosis serotype O:1b (strain IP 31758).